Reading from the N-terminus, the 847-residue chain is DNA gyrase subunit A (847 aa).

The Topo IIA-type catalytic domain maps to 34–533; it reads LPDVRDGLKP…NYSDINTSDL (500 aa). Tyr-122 (O-(5'-phospho-DNA)-tyrosine intermediate) is an active-site residue. The short motif at 560–566 is the GyrA-box element; sequence QKRGGKG.

It belongs to the type II topoisomerase GyrA/ParC subunit family. In terms of assembly, heterotetramer, composed of two GyrA and two GyrB chains. In the heterotetramer, GyrA contains the active site tyrosine that forms a transient covalent intermediate with DNA, while GyrB binds cofactors and catalyzes ATP hydrolysis.

The protein resides in the cytoplasm. The catalysed reaction is ATP-dependent breakage, passage and rejoining of double-stranded DNA.. Functionally, a type II topoisomerase that negatively supercoils closed circular double-stranded (ds) DNA in an ATP-dependent manner to modulate DNA topology and maintain chromosomes in an underwound state. Negative supercoiling favors strand separation, and DNA replication, transcription, recombination and repair, all of which involve strand separation. Also able to catalyze the interconversion of other topological isomers of dsDNA rings, including catenanes and knotted rings. Type II topoisomerases break and join 2 DNA strands simultaneously in an ATP-dependent manner. The polypeptide is DNA gyrase subunit A (Buchnera aphidicola subsp. Baizongia pistaciae (strain Bp)).